The chain runs to 127 residues: Holo-[acyl-carrier-protein] synthase (127 aa).

Mg(2+) contacts are provided by Asp9 and Glu58.

Belongs to the P-Pant transferase superfamily. AcpS family. Requires Mg(2+) as cofactor.

It localises to the cytoplasm. The catalysed reaction is apo-[ACP] + CoA = holo-[ACP] + adenosine 3',5'-bisphosphate + H(+). Its function is as follows. Transfers the 4'-phosphopantetheine moiety from coenzyme A to a Ser of acyl-carrier-protein. The chain is Holo-[acyl-carrier-protein] synthase from Shewanella oneidensis (strain ATCC 700550 / JCM 31522 / CIP 106686 / LMG 19005 / NCIMB 14063 / MR-1).